Here is a 661-residue protein sequence, read N- to C-terminus: Transketolase (661 aa).

Serine 2 carries the N-acetylserine modification. A substrate-binding site is contributed by histidine 31. Thiamine diphosphate-binding positions include histidine 71 and 119-121 (GPL). A Mg(2+)-binding site is contributed by aspartate 160. The thiamine diphosphate site is built by glycine 161 and asparagine 190. Mg(2+) is bound by residues asparagine 190 and valine 192. Residues histidine 267, arginine 359, and serine 386 each contribute to the substrate site. A thiamine diphosphate-binding site is contributed by histidine 267. Glutamate 413 acts as the Proton donor in catalysis. Phenylalanine 439 provides a ligand contact to thiamine diphosphate. Positions 463, 471, and 522 each coordinate substrate.

Belongs to the transketolase family. Homodimer. It depends on Mg(2+) as a cofactor. Requires Ca(2+) as cofactor. The cofactor is Mn(2+). Co(2+) is required as a cofactor. Thiamine diphosphate serves as cofactor.

It catalyses the reaction D-sedoheptulose 7-phosphate + D-glyceraldehyde 3-phosphate = aldehydo-D-ribose 5-phosphate + D-xylulose 5-phosphate. Its function is as follows. Catalyzes the transfer of a two-carbon ketol group from a ketose donor to an aldose acceptor, via a covalent intermediate with the cofactor thiamine pyrophosphate. In Dictyostelium discoideum (Social amoeba), this protein is Transketolase (tkt-1).